A 428-amino-acid chain; its full sequence is D-amino acid dehydrogenase (428 aa).

3–17 (VVILGSGVVGVASAY) contacts FAD.

This sequence belongs to the DadA oxidoreductase family. FAD serves as cofactor.

The catalysed reaction is a D-alpha-amino acid + A + H2O = a 2-oxocarboxylate + AH2 + NH4(+). It participates in amino-acid degradation; D-alanine degradation; NH(3) and pyruvate from D-alanine: step 1/1. Functionally, oxidative deamination of D-amino acids. This is D-amino acid dehydrogenase from Burkholderia pseudomallei (strain 1106a).